The primary structure comprises 419 residues: eIF5-mimic protein 1 (419 aa).

Residues 1-22 form a disordered region; it reads MNKHQKPVLTGQRFKTRKRDEK. An N6-acetyllysine modification is found at K117. Residues 248-415 enclose the W2 domain; the sequence is VQQSLGTRKE…QNAEEESESE (168 aa). Residues S412, S414, and S419 each carry the phosphoserine modification.

It belongs to the BZW family. As to quaternary structure, interacts with EIF3E, EIF2S2 and EIF3C.

The protein localises to the cytoplasm. Translation initiation regulator which represses non-AUG initiated translation and repeat-associated non-AUG (RAN) initiated translation by acting as a competitive inhibitor of eukaryotic translation initiation factor 5 (EIF5) function. Increases the accuracy of translation initiation by impeding EIF5-dependent translation from non-AUG codons by competing with it for interaction with EIF2S2 within the 43S pre-initiation complex (PIC) in an EIF3C-binding dependent manner. The chain is eIF5-mimic protein 1 (Bzw2) from Mus musculus (Mouse).